We begin with the raw amino-acid sequence, 267 residues long: tRNA pseudouridine synthase A (267 aa).

The active-site Nucleophile is Asp55. Residue Tyr109 participates in substrate binding.

The protein belongs to the tRNA pseudouridine synthase TruA family.

It catalyses the reaction uridine(38/39/40) in tRNA = pseudouridine(38/39/40) in tRNA. Functionally, formation of pseudouridine at positions 38, 39 and 40 in the anticodon stem and loop of transfer RNAs. This chain is tRNA pseudouridine synthase A, found in Natronomonas pharaonis (strain ATCC 35678 / DSM 2160 / CIP 103997 / JCM 8858 / NBRC 14720 / NCIMB 2260 / Gabara) (Halobacterium pharaonis).